Consider the following 208-residue polypeptide: Large ribosomal subunit protein uL3 (208 aa).

An N5-methylglutamine modification is found at Q149.

This sequence belongs to the universal ribosomal protein uL3 family. In terms of assembly, part of the 50S ribosomal subunit. Forms a cluster with proteins L14 and L19. In terms of processing, methylated by PrmB.

Functionally, one of the primary rRNA binding proteins, it binds directly near the 3'-end of the 23S rRNA, where it nucleates assembly of the 50S subunit. This Glaesserella parasuis serovar 5 (strain SH0165) (Haemophilus parasuis) protein is Large ribosomal subunit protein uL3.